A 2089-amino-acid chain; its full sequence is Non-reducing polyketide synthase PKS16 (2089 aa).

Positions 8–243 are N-terminal acylcarrier protein transacylase (SAT) domain (SAT); the sequence is VLFGDQTVDP…IKLPITAAFH (236 aa). The segment at 342–364 is disordered; it reads AGIEVSRSTEMQPRQEQRTKPRS. The span at 354–364 shows a compositional bias: basic and acidic residues; that stretch reads PRQEQRTKPRS. One can recognise a Ketosynthase family 3 (KS3) domain in the interval 364–793; it reads SSDIAIIGYA…GGNTSLLIED (430 aa). Active-site for beta-ketoacyl synthase activity residues include Cys536, His671, and His710. The malonyl-CoA:ACP transacylase (MAT) domain stretch occupies residues 891-1214; the sequence is VFLFTGQGSQ…SIANAYNSGV (324 aa). Residues 1273-1586 form a product template (PT) domain region; that stretch reads TTCLQVIENE…KRTTLQSLLG (314 aa). Residues 1276 to 1408 are N-terminal hotdog fold; it reads LQVIENETFT…CTVMYGDGHQ (133 aa). One can recognise a PKS/mFAS DH domain in the interval 1276–1582; that stretch reads LQVIENETFT…FQQMKRTTLQ (307 aa). Catalysis depends on His1309, which acts as the Proton acceptor; for dehydratase activity. The C-terminal hotdog fold stretch occupies residues 1435–1582; sequence IHRMLKEMIY…FQQMKRTTLQ (148 aa). Catalysis depends on Asp1495, which acts as the Proton donor; for dehydratase activity. The Carrier 1 domain maps to 1617-1694; it reads QSPVAGFSKV…ELRAFFLDKM (78 aa). Ser1654 carries the O-(pantetheine 4'-phosphoryl)serine modification. Residues 1697–1730 are disordered; sequence PQATANDDDSDDSSDDEGPGFSRSQSNSTISTPE. Over residues 1702–1714 the composition is skewed to acidic residues; it reads NDDDSDDSSDDEG. Polar residues predominate over residues 1718–1728; that stretch reads SRSQSNSTIST. A Carrier 2 domain is found at 1729-1806; the sequence is PEEPDVVNVL…DVQKALGAAP (78 aa). Position 1766 is an O-(pantetheine 4'-phosphoryl)serine (Ser1766). The thioesterase (TE) domain stretch occupies residues 1848–2083; sequence LFLLPDGAGS…VVGGNHFSIM (236 aa).

It functions in the pathway secondary metabolite biosynthesis. Non-reducing polyketide synthase; part of the gene cluster that mediates the biosynthesis of orcinol depsidone grayanic acid (GRA), the only major secondary metabolite known in C.grayi. The first step consists in the ring and depside synthesis by PKS16 leading to 4-O-demethylsphaerophorin, involving different orcinol-like rings, one with acetyl CoA and the other with octanoyl CoA as the starter. Further depsidone formation by the GRA cluster-specific cytochrome P450 leads to 4-O-demethylgrayanic acid. Finally, the cluster specific O-methyltransferase probably converts the 4-O-demethylgrayanic acid into grayanic acid. The sequence is that of Non-reducing polyketide synthase PKS16 from Cladonia grayi (Gray's cup lichen).